Consider the following 109-residue polypeptide: U4-lycotoxin-Ls1d (109 aa).

An N-terminal signal peptide occupies residues 1–22 (MKVLVLFSVLFLTLFSYSSTEA). Residues 23-44 (MDEFDSDAEEDMLSLMANEQVR) constitute a propeptide that is removed on maturation. The segment at 45-88 (AKACTPRLHDCSHDRHSCCRGELFKDVCYCFYPEGEDKTEVCSC) is knottin domain. Cystine bridges form between C48–C63, C55–C72, C62–C88, and C74–C86. The tract at residues 89 to 108 (QQPKSHKYIEKVVDKARTVV) is linear cationic cytotoxin domain.

This sequence belongs to the neurotoxin 19 (CSTX) family. 05 (U4-Lctx) subfamily. Expressed by the venom gland.

Its subcellular location is the secreted. Enhances the high-affinity desensitization of human P2RX3 purinoceptors. This Lycosa singoriensis (Wolf spider) protein is U4-lycotoxin-Ls1d.